Reading from the N-terminus, the 140-residue chain is Lymphocyte antigen 6H (140 aa).

An N-terminal signal peptide occupies residues 1-25 (MLPAAMKGLGLALLAVLLCSAPAHG). A UPAR/Ly6 domain is found at 26-91 (LWCQDCTLTT…RHFFSDYLMG (66 aa)). 5 disulfides stabilise this stretch: Cys-28–Cys-52, Cys-31–Cys-40, Cys-45–Cys-73, Cys-77–Cys-104, and Cys-105–Cys-110. The N-linked (GlcNAc...) asparagine glycan is linked to Asn-36. A lipid anchor (GPI-anchor amidated glycine) is attached at Gly-115. A propeptide spans 116–140 (AGHSPWALAGGLLLSLGPALLWAGP) (removed in mature form).

Interacts with CHRNA4 and CHRNA7. Highly expressed in brain (cerebral cortex, amygdala, hippocampus and subthalamic nucleus) and in acute human leukemic cell line MOLT-3. Also found in lower levels in testis, pancreas, small intestine and colon.

It is found in the cell membrane. Believed to act as a modulator of nicotinic acetylcholine receptors (nAChRs) activity. In vitro inhibits alpha-3:beta-4-containing nAChRs maximum response. May play a role in the intracellular trafficking of alpha-7-containing nAChRs and may inhibit their expression at the cell surface. Seems to inhibit alpha-7/CHRNA7 signaling in hippocampal neurons. This is Lymphocyte antigen 6H (LY6H) from Homo sapiens (Human).